Consider the following 290-residue polypeptide: ATP synthase gamma chain (290 aa).

It belongs to the ATPase gamma chain family. As to quaternary structure, F-type ATPases have 2 components, CF(1) - the catalytic core - and CF(0) - the membrane proton channel. CF(1) has five subunits: alpha(3), beta(3), gamma(1), delta(1), epsilon(1). CF(0) has three main subunits: a, b and c.

It localises to the cell inner membrane. Produces ATP from ADP in the presence of a proton gradient across the membrane. The gamma chain is believed to be important in regulating ATPase activity and the flow of protons through the CF(0) complex. The polypeptide is ATP synthase gamma chain (Anaeromyxobacter dehalogenans (strain 2CP-1 / ATCC BAA-258)).